We begin with the raw amino-acid sequence, 510 residues long: Bifunctional purine biosynthesis protein PurH (510 aa).

The 142-residue stretch at 1–142 (MRALLSVSDK…KNFKDVLIVT (142 aa)) folds into the MGS-like domain.

This sequence belongs to the PurH family.

It catalyses the reaction (6R)-10-formyltetrahydrofolate + 5-amino-1-(5-phospho-beta-D-ribosyl)imidazole-4-carboxamide = 5-formamido-1-(5-phospho-D-ribosyl)imidazole-4-carboxamide + (6S)-5,6,7,8-tetrahydrofolate. The catalysed reaction is IMP + H2O = 5-formamido-1-(5-phospho-D-ribosyl)imidazole-4-carboxamide. It functions in the pathway purine metabolism; IMP biosynthesis via de novo pathway; 5-formamido-1-(5-phospho-D-ribosyl)imidazole-4-carboxamide from 5-amino-1-(5-phospho-D-ribosyl)imidazole-4-carboxamide (10-formyl THF route): step 1/1. Its pathway is purine metabolism; IMP biosynthesis via de novo pathway; IMP from 5-formamido-1-(5-phospho-D-ribosyl)imidazole-4-carboxamide: step 1/1. In Campylobacter concisus (strain 13826), this protein is Bifunctional purine biosynthesis protein PurH.